Consider the following 486-residue polypeptide: Malonate-semialdehyde dehydrogenase 1 (486 aa).

Residues F154, K178, E181, R182, and S231 each contribute to the NAD(+) site. C286 serves as the catalytic Nucleophile. E386 is a binding site for NAD(+).

The protein belongs to the aldehyde dehydrogenase family. IolA subfamily. In terms of assembly, homotetramer.

The enzyme catalyses 3-oxopropanoate + NAD(+) + CoA + H2O = hydrogencarbonate + acetyl-CoA + NADH + H(+). It carries out the reaction 2-methyl-3-oxopropanoate + NAD(+) + CoA + H2O = propanoyl-CoA + hydrogencarbonate + NADH + H(+). It functions in the pathway polyol metabolism; myo-inositol degradation into acetyl-CoA; acetyl-CoA from myo-inositol: step 7/7. Catalyzes the oxidation of malonate semialdehyde (MSA) and methylmalonate semialdehyde (MMSA) into acetyl-CoA and propanoyl-CoA, respectively. Is involved in a myo-inositol catabolic pathway. Bicarbonate, and not CO2, is the end-product of the enzymatic reaction. This chain is Malonate-semialdehyde dehydrogenase 1, found in Bacillus thuringiensis (strain Al Hakam).